Here is an 86-residue protein sequence, read N- to C-terminus: UPF0457 protein BCE33L2265 (86 aa).

The protein belongs to the UPF0457 family.

This Bacillus cereus (strain ZK / E33L) protein is UPF0457 protein BCE33L2265.